The sequence spans 595 residues: Sulfite reductase [NADPH] flavoprotein alpha-component (595 aa).

The Flavodoxin-like domain maps to isoleucine 59–valine 197. Residues serine 65–alanine 70, serine 112–glycine 115, and leucine 148–alanine 157 each bind FMN. In terms of domain architecture, FAD-binding FR-type spans glutamate 230–proline 444. Residues threonine 318, phenylalanine 352, arginine 382–serine 385, threonine 400–serine 402, tyrosine 406, and glycine 415–serine 418 contribute to the FAD site. Residues serine 515–glutamine 516, lysine 521–glutamine 525, and aspartate 557 contribute to the NADP(+) site. Residue tyrosine 595 coordinates FAD.

The protein belongs to the NADPH-dependent sulphite reductase flavoprotein subunit CysJ family. In the N-terminal section; belongs to the flavodoxin family. It in the C-terminal section; belongs to the flavoprotein pyridine nucleotide cytochrome reductase family. Alpha(8)-beta(8). The alpha component is a flavoprotein, the beta component is a hemoprotein. FAD is required as a cofactor. The cofactor is FMN.

The catalysed reaction is hydrogen sulfide + 3 NADP(+) + 3 H2O = sulfite + 3 NADPH + 4 H(+). Its pathway is sulfur metabolism; hydrogen sulfide biosynthesis; hydrogen sulfide from sulfite (NADPH route): step 1/1. Component of the sulfite reductase complex that catalyzes the 6-electron reduction of sulfite to sulfide. This is one of several activities required for the biosynthesis of L-cysteine from sulfate. The flavoprotein component catalyzes the electron flow from NADPH -&gt; FAD -&gt; FMN to the hemoprotein component. The chain is Sulfite reductase [NADPH] flavoprotein alpha-component from Baumannia cicadellinicola subsp. Homalodisca coagulata.